We begin with the raw amino-acid sequence, 207 residues long: MSAFNLSAIAFILAAIGLVVFMLVVPRLLGGRSHGSQKEEIFEAGVVGSGNARIRLSAKFYLVAIFFVIFDLEALYLYAYAVSVREAGWLGFAAAAIFITILIIGLVYELSLGAMNWAPADKLRKKARLYAAPAGFSLADITKFDGVDELMVDPTGKIPAQSSGQINVSNNIETNRRHLQNIDHINTTGNVTSVDFATSAQTDKMTR.

The next 3 helical transmembrane spans lie at 6-26 (LSAI…LVVP), 62-82 (LVAI…AYAV), and 87-107 (AGWL…IGLV).

This sequence belongs to the complex I subunit 3 family. As to quaternary structure, NDH-1 is composed of 14 different subunits. Subunits NuoA, H, J, K, L, M, N constitute the membrane sector of the complex.

Its subcellular location is the cell inner membrane. It catalyses the reaction a quinone + NADH + 5 H(+)(in) = a quinol + NAD(+) + 4 H(+)(out). Functionally, NDH-1 shuttles electrons from NADH, via FMN and iron-sulfur (Fe-S) centers, to quinones in the respiratory chain. The immediate electron acceptor for the enzyme in this species is believed to be ubiquinone. Couples the redox reaction to proton translocation (for every two electrons transferred, four hydrogen ions are translocated across the cytoplasmic membrane), and thus conserves the redox energy in a proton gradient. This Psychrobacter cryohalolentis (strain ATCC BAA-1226 / DSM 17306 / VKM B-2378 / K5) protein is NADH-quinone oxidoreductase subunit A.